We begin with the raw amino-acid sequence, 541 residues long: Chaperonin GroEL 1 (541 aa).

ATP is bound by residues 29–32 (TLGP), 86–90 (DGTTT), glycine 413, 477–479 (NAA), and aspartate 493.

Belongs to the chaperonin (HSP60) family. In terms of assembly, forms a cylinder of 14 subunits composed of two heptameric rings stacked back-to-back. Interacts with the co-chaperonin GroES.

The protein resides in the cytoplasm. The enzyme catalyses ATP + H2O + a folded polypeptide = ADP + phosphate + an unfolded polypeptide.. Functionally, together with its co-chaperonin GroES, plays an essential role in assisting protein folding. The GroEL-GroES system forms a nano-cage that allows encapsulation of the non-native substrate proteins and provides a physical environment optimized to promote and accelerate protein folding. The chain is Chaperonin GroEL 1 from Paenarthrobacter aurescens (strain TC1).